We begin with the raw amino-acid sequence, 292 residues long: mRNA export protein 33 (292 aa).

A disordered region spans residues 1–76 (MPPKKAAKGK…RKRREEEKRA (76 aa)). Basic and acidic residues-rich tracts occupy residues 9 to 26 (GKGDPGKAAKKDPTKKAA) and 58 to 76 (KDAKRQEALRKRREEEKRA). The C3H1-type zinc-finger motif lies at 134 to 172 (INTDIVCKFFLEACETGKYGWLWQCPNGNMTCIYKHALP).

The protein localises to the cytoplasm. In terms of biological role, functions as a component of the nuclear pore complex (NPC). NPC components, collectively referred to as nucleoporins (NUPs), can play the role of both NPC structural components and of docking or interaction partners for transiently associated nuclear transport factors. Active directional transport is assured by both, a Phe-Gly (FG) repeat affinity gradient for these transport factors across the NPC and a transport cofactor concentration gradient across the nuclear envelope. Involved in the export of mRNA from the nucleus to the cytoplasm. May play a role in mitotic spindle formation and/or function. This chain is mRNA export protein 33 (mep33), found in Schizosaccharomyces pombe (strain 972 / ATCC 24843) (Fission yeast).